A 436-amino-acid chain; its full sequence is Testican-3 (436 aa).

The first 21 residues, 1–21, serve as a signal peptide directing secretion; it reads MLKVSAVLCVCAAAWCSQSLA. 8 disulfide bridges follow: cysteine 90/cysteine 101, cysteine 95/cysteine 111, cysteine 139/cysteine 169, cysteine 142/cysteine 162, cysteine 151/cysteine 183, cysteine 317/cysteine 341, cysteine 352/cysteine 359, and cysteine 361/cysteine 380. The Kazal-like domain maps to 133–185; sequence GPILSTCKQCPVVYPSPVCGSDGHTYSFQCKLEYQACVLGKQISVKCEGHCPC. Residues 314–380 enclose the Thyroglobulin type-1 domain; it reads DPPCQTELSN…GSRINGVADC (67 aa). O-linked (Xyl...) (glycosaminoglycan) serine glycosylation is found at serine 387 and serine 392. Residues 393-436 form a disordered region; it reads GDFHEWTDDEDDEDDIMNDEDEIEDDDEDEGDDDDGGDDHDVYI. Over residues 399–430 the composition is skewed to acidic residues; the sequence is TDDEDDEDDIMNDEDEIEDDDEDEGDDDDGGD.

In terms of processing, contains chondroitin sulfate and heparan sulfate O-linked oligosaccharides. In terms of tissue distribution, expressed in brain.

The protein resides in the secreted. It is found in the extracellular space. The protein localises to the extracellular matrix. In terms of biological role, may participate in diverse steps of neurogenesis. Inhibits the processing of pro-matrix metalloproteinase 2 (MMP-2) by MT1-MMP and MT3-MMP. May interfere with tumor invasion. This is Testican-3 (SPOCK3) from Homo sapiens (Human).